An 855-amino-acid polypeptide reads, in one-letter code: MVFTVSCSKMSSIVDRDDSSIFDGLVEEDDKDKAKRVSRNKSEKKRRDQFNVLIKELGSMLPGNARKMDKSTVLQKSIDFLRKHKETTAQSDASEIRQDWKPTFLSNEEFTQLMLEALDGFFLAIMTDGSIIYVSESVTSLLEHLPSDLVDQSIFNFIPEGEHSEVYKILSTHLLESDSLTPEYLKSKNQLEFCCHMLRGTIDPKEPSTYEYVRFIGNFKSLTSVSTSTHNGFEGTIQRTHRPSYEDRVCFVATVRLATPQFIKEMCTVEEPNEEFTSRHSLEWKFLFLDHRAPPIIGYLPFEVLGTSGYDYYHVDDLENLAKCHEHLMQYGKGKSCYYRFLTKGQQWIWLQTHYYITYHQWNSRPEFIVCTHTVVSYAEVRAERRRELGIEESLPETAADKSQDSGSDNRINTVSLKEALERFDHSPTPSASSRSSRKSSHTAVSDPSSTPTKIPTDTSTPPRQHLPAHEKMTQRRSSFSSQSINSQSVGPSLTQPAMSQAANLPIPQGMSQFQFSAQLGAMQHLKDQLEQRTRMIEANIHRQQEELRKIQEQLQMVHGQGLQMFLQQSNPGLNFGSVQLSSGNSNIQQLTPVNMQGQVVPANQVQSGHISTGQHMIQQQTLQSTSTQQSQQSVMSGHSQQTSLPSQTPSTLTAPLYNTMVISQPAAGSMVQIPSSMPQNSTQSATVTTFTQDRQIRFSQGQQLVTKLVTAPVACGAVMVPSTMLMGQVVTAYPTFATQQQQAQTLSVTQQQQQQQQQPPQQQQQQQQSSQEQQLPSVQQPAQAQLGQPPQQFLQTSRLLHGNPSTQLILSAAFPLQQSTFPPSHHQQHQPQQQQQLPRHRTDSLTDPSKVQPQ.

The short motif at 32–47 (DKAKRVSRNKSEKKRR) is the Nuclear localization signal element. Residues 34–84 (AKRVSRNKSEKKRRDQFNVLIKELGSMLPGNARKMDKSTVLQKSIDFLRKH) enclose the bHLH domain. Residues S38 and S42 each carry the phosphoserine modification. A Glycyl lysine isopeptide (Lys-Gly) (interchain with G-Cter in SUMO1) cross-link involves residue K67. PAS domains follow at residues 107–177 (NEEF…LLES) and 262–332 (FIKE…MQYG). In terms of domain architecture, PAC spans 336-379 (SCYYRFLTKGQQWIWLQTHYYITYHQWNSRPEFIVCTHTVVSYA). Positions 371-854 (CTHTVVSYAE…SLTDPSKVQP (484 aa)) are interaction with NR3C1. 2 disordered regions span residues 392–411 (EESL…SDNR) and 420–497 (ALER…LTQP). S408 bears the Phosphoserine mark. S427 carries the post-translational modification Phosphoserine; by GSK3-beta. S431 carries the phosphoserine modification. Polar residues predominate over residues 447–463 (DPSSTPTKIPTDTSTPP). The segment at 450-570 (STPTKIPTDT…QGLQMFLQQS (121 aa)) is interaction with SIRT1. Residues T451 and T461 each carry the phosphothreonine; by CDK5 modification. A compositionally biased stretch (low complexity) spans 478 to 493 (SSFSSQSINSQSVGPS). The segment at 514–564 (FQFSAQLGAMQHLKDQLEQRTRMIEANIHRQQEELRKIQEQLQMVHGQGLQ) is implicated in the circadian rhythmicity. 3 disordered regions span residues 613-650 (TGQH…SQTP), 752-791 (QQQQ…GQPP), and 814-855 (AFPL…VQPQ). Residues 619–650 (QQQTLQSTSTQQSQQSVMSGHSQQTSLPSQTP) are compositionally biased toward low complexity. Residues 818–837 (QQSTFPPSHHQQHQPQQQQQ) are compositionally biased toward low complexity. Residues 846–855 (LTDPSKVQPQ) show a composition bias toward polar residues. Residue K851 forms a Glycyl lysine isopeptide (Lys-Gly) (interchain with G-Cter in SUMO1) linkage.

In terms of assembly, component of the circadian clock oscillator which includes the CRY proteins, CLOCK or NPAS2, BMAL1 or BMAL2, CSNK1D and/or CSNK1E, TIMELESS and the PER proteins. Forms a heterodimer with BMAL1. The CLOCK-BMAL1 heterodimer is required for E-box-dependent transactivation, for CLOCK nuclear translocation and degradation, and for phosphorylation of both CLOCK and BMAL1. Interacts with NR3C1 in a ligand-dependent fashion. Interacts with ESR1 and estrogen stimulates this interaction. Interacts with the complex p35/CDK5. Interacts with RELA/p65. Interacts with KAT2B, CREBBP and EP300. Interacts with ID1 and ID3. Interacts with ID2. Interacts with MTA1. Interacts with OGA. Interacts with SIRT1. Interacts with CIPC. Interacts with EZH2. Interacts with EIF4E, PIWIL1 and DDX4. Interacts with PER1, PER2, CRY1 and CRY2 and this interaction requires a translocation to the nucleus. Interaction of the CLOCK-BMAL1 heterodimer with PER or CRY inhibits transcription activation. Interaction of the CLOCK-BMAL1 with CRY1 is independent of DNA but with PER2 is off DNA. The CLOCK-BMAL1 heterodimer interacts with GSK3B. Interacts with KDM5A. Interacts with KMT2A; in a circadian manner. Interacts with MYBBP1A. Interacts with THRAP3. Interacts with MED1; this interaction requires the presence of THRAP3. Interacts with NCOA2. The CLOCK-BMAL1 heterodimer interacts with PASD1. Interacts with NDUFA9. Interacts with IMPDH2; in a circadian manner. Interacts with ASS1; in a circadian manner. Interacts with PIWIL2 (via PIWI domain). Interacts with HNF4A. Post-translationally, ubiquitinated, leading to its proteasomal degradation. O-glycosylated; contains O-GlcNAc. O-glycosylation by OGT prevents protein degradation by inhibiting ubiquitination. It also stabilizes the CLOCK-BMAL1 heterodimer thereby increasing CLOCK-BMAL1-mediated transcriptional activation of PER1/2/3 and CRY1/2. In terms of processing, phosphorylation is dependent on the CLOCK-BMAL1 heterodimer formation. Phosphorylation enhances the transcriptional activity, alters the subcellular localization and decreases the stability of the heterodimer by promoting its degradation. Phosphorylation shows circadian variations in the liver: the hyperphosphorylated form peaks at midnight (CT18), while the hypophosphorylated form is abundant throughout the day. May be phosphorylated by CSNK1D and CKSN1E. Post-translationally, sumoylation enhances its transcriptional activity and interaction with ESR1, resulting in up-regulation of ESR1 activity. Estrogen stimulates sumoylation. Desumoylation by SENP1 negatively regulates its transcriptional activity. Undergoes lysosome-mediated degradation in a time-dependent manner in the liver. As to expression, expressed equally in brain, eye, testes, ovaries, liver, heart, lung, kidney. In the brain, expression is abundant in the suprachiasmatic nuclei (SCN), in the pyriform cortex, and in the hippocampus. Low expression throughout the rest of the brain. Expression does not appear to undergo circadian oscillations.

The protein resides in the nucleus. The protein localises to the cytoplasm. It localises to the cytosol. It carries out the reaction L-lysyl-[protein] + acetyl-CoA = N(6)-acetyl-L-lysyl-[protein] + CoA + H(+). Functionally, transcriptional activator which forms a core component of the circadian clock. The circadian clock, an internal time-keeping system, regulates various physiological processes through the generation of approximately 24 hour circadian rhythms in gene expression, which are translated into rhythms in metabolism and behavior. It is derived from the Latin roots 'circa' (about) and 'diem' (day) and acts as an important regulator of a wide array of physiological functions including metabolism, sleep, body temperature, blood pressure, endocrine, immune, cardiovascular, and renal function. Consists of two major components: the central clock, residing in the suprachiasmatic nucleus (SCN) of the brain, and the peripheral clocks that are present in nearly every tissue and organ system. Both the central and peripheral clocks can be reset by environmental cues, also known as Zeitgebers (German for 'timegivers'). The predominant Zeitgeber for the central clock is light, which is sensed by retina and signals directly to the SCN. The central clock entrains the peripheral clocks through neuronal and hormonal signals, body temperature and feeding-related cues, aligning all clocks with the external light/dark cycle. Circadian rhythms allow an organism to achieve temporal homeostasis with its environment at the molecular level by regulating gene expression to create a peak of protein expression once every 24 hours to control when a particular physiological process is most active with respect to the solar day. Transcription and translation of core clock components (CLOCK, NPAS2, BMAL1, BMAL2, PER1, PER2, PER3, CRY1 and CRY2) plays a critical role in rhythm generation, whereas delays imposed by post-translational modifications (PTMs) are important for determining the period (tau) of the rhythms (tau refers to the period of a rhythm and is the length, in time, of one complete cycle). A diurnal rhythm is synchronized with the day/night cycle, while the ultradian and infradian rhythms have a period shorter and longer than 24 hours, respectively. Disruptions in the circadian rhythms contribute to the pathology of cardiovascular diseases, cancer, metabolic syndromes and aging. A transcription/translation feedback loop (TTFL) forms the core of the molecular circadian clock mechanism. Transcription factors, CLOCK or NPAS2 and BMAL1 or BMAL2, form the positive limb of the feedback loop, act in the form of a heterodimer and activate the transcription of core clock genes and clock-controlled genes (involved in key metabolic processes), harboring E-box elements (5'-CACGTG-3') within their promoters. The core clock genes: PER1/2/3 and CRY1/2 which are transcriptional repressors form the negative limb of the feedback loop and interact with the CLOCK|NPAS2-BMAL1|BMAL2 heterodimer inhibiting its activity and thereby negatively regulating their own expression. This heterodimer also activates nuclear receptors NR1D1/2 and RORA/B/G, which form a second feedback loop and which activate and repress BMAL1 transcription, respectively. Regulates the circadian expression of ICAM1, VCAM1, CCL2, THPO and MPL and also acts as an enhancer of the transactivation potential of NF-kappaB. Plays an important role in the homeostatic regulation of sleep. The CLOCK-BMAL1 heterodimer regulates the circadian expression of SERPINE1/PAI1, VWF, B3, CCRN4L/NOC, NAMPT, DBP, MYOD1, PPARGC1A, PPARGC1B, SIRT1, GYS2, F7, NGFR, GNRHR, BHLHE40/DEC1, ATF4, MTA1, KLF10 and also genes implicated in glucose and lipid metabolism. Promotes rhythmic chromatin opening, regulating the DNA accessibility of other transcription factors. May play a role in spermatogenesis; contributes to the chromatoid body assembly and physiology. The CLOCK-BMAL2 heterodimer activates the transcription of SERPINE1/PAI1 and BHLHE40/DEC1. The preferred binding motif for the CLOCK-BMAL1 heterodimer is 5'-CACGTGA-3', which contains a flanking adenine nucleotide at the 3-prime end of the canonical 6-nucleotide E-box sequence. CLOCK specifically binds to the half-site 5'-CAC-3', while BMAL1 binds to the half-site 5'-GTGA-3'. The CLOCK-BMAL1 heterodimer also recognizes the non-canonical E-box motifs 5'-AACGTGA-3' and 5'-CATGTGA-3'. CLOCK has an intrinsic acetyltransferase activity, which enables circadian chromatin remodeling by acetylating histones and nonhistone proteins, including its own partner BMAL1. Represses glucocorticoid receptor NR3C1/GR-induced transcriptional activity by reducing the association of NR3C1/GR to glucocorticoid response elements (GREs) via the acetylation of multiple lysine residues located in its hinge region. The acetyltransferase activity of CLOCK is as important as its transcription activity in circadian control. Acetylates metabolic enzymes IMPDH2 and NDUFA9 in a circadian manner. Facilitated by BMAL1, rhythmically interacts and acetylates argininosuccinate synthase 1 (ASS1) leading to enzymatic inhibition of ASS1 as well as the circadian oscillation of arginine biosynthesis and subsequent ureagenesis. Drives the circadian rhythm of blood pressure through transcriptional activation of ATP1B1. This chain is Circadian locomoter output cycles protein kaput (Clock), found in Mus musculus (Mouse).